We begin with the raw amino-acid sequence, 466 residues long: MSTLMNIREYNSISMIKGPLMAIEGVTDAAYNELIEVEMPDGSKRRGIVVDSQSGVAIVQVFEGTTGVSPTQSKVRFLGRGLEVKISEEMLGRIFTPLGEPLDNGPQVLSGEKRDINGSPLNPSVREYPEEFIQTGVSAIDGLTSLLRGQKLPIFSGSGLPANQLAAQIAKQATVRGEESNFAVVFAAIGIRYDEALFFRRFFEETGAINRVAMFVTLANDPPSLKILTPKTALTLAEYLAYEKDMHILAILIDMTNYCEALRELSASKEEVPGRGGYPGYMYTDLAVTYERAGKVRGKKGSITQMPILTMPNDDITHPIPDLTGYITEGQIVLDRSLFNKGIYPPINVLASLSRLMRDGIGEGKTRDDHKDLSNQLFAAYARAQDIRGLAAIIGEDSLSDVDRKYLLFAEQFERKFINQGINENRDIETTLDIGWEVISMLPESEISLIRTEYIKKYHPNYRVKK.

This sequence belongs to the ATPase alpha/beta chains family. As to quaternary structure, has multiple subunits with at least A(3), B(3), C, D, E, F, H, I and proteolipid K(x).

The protein localises to the cell membrane. Component of the A-type ATP synthase that produces ATP from ADP in the presence of a proton gradient across the membrane. The B chain is a regulatory subunit. This is A-type ATP synthase subunit B from Sulfolobus acidocaldarius (strain ATCC 33909 / DSM 639 / JCM 8929 / NBRC 15157 / NCIMB 11770).